The primary structure comprises 508 residues: Non-structural protein 1 (508 aa).

The span at N424 to G453 shows a compositional bias: polar residues. Positions N424–E464 are disordered. Basic and acidic residues predominate over residues H455 to E464.

The sequence is that of Non-structural protein 1 (Segment-5) from Banna virus (BAV).